Here is a 160-residue protein sequence, read N- to C-terminus: Ribonuclease P protein component 2 (160 aa).

The protein belongs to the eukaryotic/archaeal RNase P protein component 2 family. As to quaternary structure, consists of a catalytic RNA component and at least 4-5 protein subunits.

The protein resides in the cytoplasm. The enzyme catalyses Endonucleolytic cleavage of RNA, removing 5'-extranucleotides from tRNA precursor.. Part of ribonuclease P, a protein complex that generates mature tRNA molecules by cleaving their 5'-ends. The protein is Ribonuclease P protein component 2 of Methanoculleus marisnigri (strain ATCC 35101 / DSM 1498 / JR1).